Reading from the N-terminus, the 143-residue chain is 16 kDa calcium-binding protein (143 aa).

EF-hand domains are found at residues 2–37 (SEEK…VGVC), 41–71 (ADKI…LPPR), 73–108 (KCVA…SGMD), and 109–143 (IDQN…QTYK). Residues aspartate 15, aspartate 17, asparagine 19, glutamate 26, aspartate 49, asparagine 51, aspartate 53, lysine 55, glutamate 60, aspartate 86, aspartate 88, serine 90, lysine 92, glutamate 97, aspartate 122, asparagine 124, aspartate 126, glutamate 128, and glutamate 133 each coordinate Ca(2+).

As to expression, found in eggs.

Functionally, calcium-binding protein. The sequence is that of 16 kDa calcium-binding protein from Schistosoma mansoni (Blood fluke).